The sequence spans 73 residues: Aminopeptidase G (73 aa).

The segment at 39 to 73 is disordered; sequence GRRAASSSWPGRGSSRRWRPGRRTGAAARGCWRAP. Low complexity-rich tracts occupy residues 42–51 and 61–73; these read AASSSWPGRG and RTGA…WRAP.

It belongs to the peptidase M1 family. Zn(2+) serves as cofactor.

The protein resides in the cytoplasm. Its function is as follows. Hydrolyzes preferentially the N-terminal glycine and can also hydrolyze other amino acids which are used by PepN but is unable to hydrolyze basic amino acids. This is Aminopeptidase G (pepG) from Streptomyces lividans.